Reading from the N-terminus, the 79-residue chain is Sec-independent protein translocase protein TatA (79 aa).

Residues 1 to 21 form a helical membrane-spanning segment; sequence MGGWSSPSHWLIILLIVVLLF. Over residues 49–61 the composition is skewed to basic and acidic residues; it reads EVAKNTQKIEENK. The interval 49-79 is disordered; sequence EVAKNTQKIEENKNTTNNTNADASIDETKKA.

This sequence belongs to the TatA/E family. The Tat system comprises two distinct complexes: a TatABC complex, containing multiple copies of TatA, TatB and TatC subunits, and a separate TatA complex, containing only TatA subunits. Substrates initially bind to the TatABC complex, which probably triggers association of the separate TatA complex to form the active translocon.

It localises to the cell inner membrane. Part of the twin-arginine translocation (Tat) system that transports large folded proteins containing a characteristic twin-arginine motif in their signal peptide across membranes. TatA could form the protein-conducting channel of the Tat system. This Campylobacter jejuni subsp. doylei (strain ATCC BAA-1458 / RM4099 / 269.97) protein is Sec-independent protein translocase protein TatA.